A 448-amino-acid chain; its full sequence is Methylenetetrahydrofolate--tRNA-(uracil-5-)-methyltransferase TrmFO (448 aa).

13–18 (GAGLAG) contributes to the FAD binding site.

The protein belongs to the MnmG family. TrmFO subfamily. FAD is required as a cofactor.

The protein resides in the cytoplasm. It carries out the reaction uridine(54) in tRNA + (6R)-5,10-methylene-5,6,7,8-tetrahydrofolate + NADH + H(+) = 5-methyluridine(54) in tRNA + (6S)-5,6,7,8-tetrahydrofolate + NAD(+). The catalysed reaction is uridine(54) in tRNA + (6R)-5,10-methylene-5,6,7,8-tetrahydrofolate + NADPH + H(+) = 5-methyluridine(54) in tRNA + (6S)-5,6,7,8-tetrahydrofolate + NADP(+). Its function is as follows. Catalyzes the folate-dependent formation of 5-methyl-uridine at position 54 (M-5-U54) in all tRNAs. In Streptococcus pyogenes serotype M12 (strain MGAS2096), this protein is Methylenetetrahydrofolate--tRNA-(uracil-5-)-methyltransferase TrmFO.